The primary structure comprises 429 residues: Glutamyl-tRNA reductase (429 aa).

Substrate is bound by residues 49 to 52 (TCNR), Ser-107, 112 to 114 (EPQ), and Gln-118. Cys-50 (nucleophile) is an active-site residue. 187–192 (GAGKTI) contacts NADP(+).

This sequence belongs to the glutamyl-tRNA reductase family. As to quaternary structure, homodimer.

The catalysed reaction is (S)-4-amino-5-oxopentanoate + tRNA(Glu) + NADP(+) = L-glutamyl-tRNA(Glu) + NADPH + H(+). It functions in the pathway porphyrin-containing compound metabolism; protoporphyrin-IX biosynthesis; 5-aminolevulinate from L-glutamyl-tRNA(Glu): step 1/2. Catalyzes the NADPH-dependent reduction of glutamyl-tRNA(Glu) to glutamate 1-semialdehyde (GSA). In Marinobacter nauticus (strain ATCC 700491 / DSM 11845 / VT8) (Marinobacter aquaeolei), this protein is Glutamyl-tRNA reductase.